The following is a 358-amino-acid chain: Holliday junction branch migration complex subunit RuvB (358 aa).

The tract at residues 1 to 24 (MSIQTDDFAAPPPKRILSGAPASP) is disordered. The large ATPase domain (RuvB-L) stretch occupies residues 5-194 (TDDFAAPPPK…FGIVARLEFY (190 aa)). Residues leucine 33, arginine 34, glycine 75, lysine 78, threonine 79, threonine 80, 141–143 (EDY), arginine 184, tyrosine 194, and arginine 231 contribute to the ATP site. Position 79 (threonine 79) interacts with Mg(2+). Residues 195–265 (SPEELASIVR…IAHRALVMLD (71 aa)) are small ATPAse domain (RuvB-S). Residues 268-358 (PQGFDLMDRK…GDMFGAMRPE (91 aa)) are head domain (RuvB-H). DNA-binding residues include arginine 304, arginine 323, and arginine 328.

This sequence belongs to the RuvB family. Homohexamer. Forms an RuvA(8)-RuvB(12)-Holliday junction (HJ) complex. HJ DNA is sandwiched between 2 RuvA tetramers; dsDNA enters through RuvA and exits via RuvB. An RuvB hexamer assembles on each DNA strand where it exits the tetramer. Each RuvB hexamer is contacted by two RuvA subunits (via domain III) on 2 adjacent RuvB subunits; this complex drives branch migration. In the full resolvosome a probable DNA-RuvA(4)-RuvB(12)-RuvC(2) complex forms which resolves the HJ.

It localises to the cytoplasm. The enzyme catalyses ATP + H2O = ADP + phosphate + H(+). The RuvA-RuvB-RuvC complex processes Holliday junction (HJ) DNA during genetic recombination and DNA repair, while the RuvA-RuvB complex plays an important role in the rescue of blocked DNA replication forks via replication fork reversal (RFR). RuvA specifically binds to HJ cruciform DNA, conferring on it an open structure. The RuvB hexamer acts as an ATP-dependent pump, pulling dsDNA into and through the RuvAB complex. RuvB forms 2 homohexamers on either side of HJ DNA bound by 1 or 2 RuvA tetramers; 4 subunits per hexamer contact DNA at a time. Coordinated motions by a converter formed by DNA-disengaged RuvB subunits stimulates ATP hydrolysis and nucleotide exchange. Immobilization of the converter enables RuvB to convert the ATP-contained energy into a lever motion, pulling 2 nucleotides of DNA out of the RuvA tetramer per ATP hydrolyzed, thus driving DNA branch migration. The RuvB motors rotate together with the DNA substrate, which together with the progressing nucleotide cycle form the mechanistic basis for DNA recombination by continuous HJ branch migration. Branch migration allows RuvC to scan DNA until it finds its consensus sequence, where it cleaves and resolves cruciform DNA. The chain is Holliday junction branch migration complex subunit RuvB from Albidiferax ferrireducens (strain ATCC BAA-621 / DSM 15236 / T118) (Rhodoferax ferrireducens).